The following is a 277-amino-acid chain: MAYSLTRKLLKDWKYFMRHPEKTQGLFHVRPHDSDLHLWHVVMYEPRTSLEVYLLLYIGGNDQDPYIIMKCLSPNCCFPINRTVSMTHLNYLLLKDLGLQDLLFHIWQPLFHIQATEDLQYSPSTVKFNRAWNRIIYKDFKSYFPELIGTLQPGDYSIVKSYSKNHNISNSNGGSVNEFMSSYNAQSHTFHAQDNSKNPYTNSSIGKSSMLSTLNNNNVNKRTHDYNAIDFMTKNLLACDDDSIHPVVSSKRSRTLACPDETNDNRGSEHYTKRKKI.

The disordered stretch occupies residues 254 to 277 (RTLACPDETNDNRGSEHYTKRKKI).

Not known; its elevated expression suppresses the conditional cell cycle defects associated with UBC3/CDC34 mutations. The chain is Ubiquitin-conjugating enzyme suppressor 1 (UBS1) from Saccharomyces cerevisiae (strain ATCC 204508 / S288c) (Baker's yeast).